Here is a 314-residue protein sequence, read N- to C-terminus: ATP synthase gamma chain (314 aa).

This sequence belongs to the ATPase gamma chain family. As to quaternary structure, F-type ATPases have 2 components, CF(1) - the catalytic core - and CF(0) - the membrane proton channel. CF(1) has five subunits: alpha(3), beta(3), gamma(1), delta(1), epsilon(1). CF(0) has three main subunits: a, b and c.

The protein localises to the cellular thylakoid membrane. Functionally, produces ATP from ADP in the presence of a proton gradient across the membrane. The gamma chain is believed to be important in regulating ATPase activity and the flow of protons through the CF(0) complex. This Rippkaea orientalis (strain PCC 8801 / RF-1) (Cyanothece sp. (strain PCC 8801)) protein is ATP synthase gamma chain.